A 219-amino-acid chain; its full sequence is Protein DCL homolog, chloroplastic (219 aa).

The transit peptide at 1–48 directs the protein to the chloroplast; the sequence is MSLASIPSSSPVASPYFRCRTYIFSFSSSPLCLYFPRGDSTSLRPRVR. The interval 70 to 96 is disordered; that stretch reads LRRPRIASEESSEEEEEEEEENSEGDE. Positions 79–96 are enriched in acidic residues; that stretch reads ESSEEEEEEEEENSEGDE.

As to expression, expressed in leaves, stems, flowers and siliques.

Its subcellular location is the plastid. The protein localises to the chloroplast. Required for normal plastid function and plant development. Required for correct plastid ribosome assembly. Required for processing and maturation of 4.5S rRNA. This Arabidopsis thaliana (Mouse-ear cress) protein is Protein DCL homolog, chloroplastic.